Reading from the N-terminus, the 110-residue chain is Large ribosomal subunit protein uL22 (110 aa).

It belongs to the universal ribosomal protein uL22 family. As to quaternary structure, part of the 50S ribosomal subunit.

Its function is as follows. This protein binds specifically to 23S rRNA; its binding is stimulated by other ribosomal proteins, e.g. L4, L17, and L20. It is important during the early stages of 50S assembly. It makes multiple contacts with different domains of the 23S rRNA in the assembled 50S subunit and ribosome. Functionally, the globular domain of the protein is located near the polypeptide exit tunnel on the outside of the subunit, while an extended beta-hairpin is found that lines the wall of the exit tunnel in the center of the 70S ribosome. This chain is Large ribosomal subunit protein uL22, found in Shewanella amazonensis (strain ATCC BAA-1098 / SB2B).